The primary structure comprises 126 residues: UPF0538 protein C2orf76 (126 aa).

This sequence belongs to the UPF0538 family.

The sequence is that of UPF0538 protein C2orf76 (C2orf76) from Homo sapiens (Human).